Here is a 119-residue protein sequence, read N- to C-terminus: Class I hydrophobin 2 (119 aa).

An N-terminal signal peptide occupies residues 1-22 (MFARISTIITTLFFAMLAAATA). 4 cysteine pairs are disulfide-bonded: C36/C97, C45/C91, C46/C79, and C98/C112.

This sequence belongs to the fungal hydrophobin family. Self-assembles to form functional amyloid fibrils called rodlets. Self-assembly into fibrillar rodlets occurs spontaneously at hydrophobic:hydrophilic interfaces and the rodlets further associate laterally to form amphipathic monolayers.

The protein localises to the secreted. Its subcellular location is the cell wall. Its function is as follows. Aerial growth, conidiation, and dispersal of filamentous fungi in the environment rely upon a capability of their secreting small amphipathic proteins called hydrophobins (HPBs) with low sequence identity. Class I can self-assemble into an outermost layer of rodlet bundles on aerial cell surfaces, conferring cellular hydrophobicity that supports fungal growth, development and dispersal; whereas Class II form highly ordered films at water-air interfaces through intermolecular interactions but contribute nothing to the rodlet structure. Abh2 is a class I hydrophobin involved in the emergence of aerial hyphae and strands. The sequence is that of Class I hydrophobin 2 from Agaricus bisporus (White button mushroom).